A 454-amino-acid chain; its full sequence is Serine/threonine-protein phosphatase C23G10.1 (454 aa).

Positions 196, 198, 224, and 256 each coordinate Mn(2+). Catalysis depends on histidine 257, which acts as the Proton donor. Mn(2+)-binding residues include histidine 308 and histidine 382.

It belongs to the PPP phosphatase family. PP-1 subfamily. The cofactor is Mn(2+).

The enzyme catalyses O-phospho-L-seryl-[protein] + H2O = L-seryl-[protein] + phosphate. It catalyses the reaction O-phospho-L-threonyl-[protein] + H2O = L-threonyl-[protein] + phosphate. The protein is Serine/threonine-protein phosphatase C23G10.1 of Caenorhabditis elegans.